Reading from the N-terminus, the 592-residue chain is V-type ATP synthase alpha chain (592 aa).

Glycine 233–threonine 240 serves as a coordination point for ATP.

The protein belongs to the ATPase alpha/beta chains family.

The enzyme catalyses ATP + H2O + 4 H(+)(in) = ADP + phosphate + 5 H(+)(out). Produces ATP from ADP in the presence of a proton gradient across the membrane. The V-type alpha chain is a catalytic subunit. The sequence is that of V-type ATP synthase alpha chain from Clostridium botulinum (strain Okra / Type B1).